Reading from the N-terminus, the 158-residue chain is Cytochrome c-type biogenesis protein CcmE (158 aa).

Residues 1-8 lie on the Cytoplasmic side of the membrane; the sequence is MMRHRNRR. The helical; Signal-anchor for type II membrane protein transmembrane segment at 9 to 29 threads the bilayer; it reads LATIAASAIVLVVAVGLGLMA. Topologically, residues 30–158 are periplasmic; the sequence is LRSAVVFFYS…PSAAGDGDSR (129 aa). The heme site is built by H123 and Y127. Residues 139–158 form a disordered region; that stretch reads AGVWQGEGETPSAAGDGDSR.

Belongs to the CcmE/CycJ family.

It is found in the cell inner membrane. Functionally, heme chaperone required for the biogenesis of c-type cytochromes. Transiently binds heme delivered by CcmC and transfers the heme to apo-cytochromes in a process facilitated by CcmF and CcmH. This chain is Cytochrome c-type biogenesis protein CcmE, found in Maricaulis maris (strain MCS10) (Caulobacter maris).